The chain runs to 445 residues: tRNA(Ile)-lysidine synthase (445 aa).

An ATP-binding site is contributed by 38-43 (SGGLDS).

It belongs to the tRNA(Ile)-lysidine synthase family.

Its subcellular location is the cytoplasm. It carries out the reaction cytidine(34) in tRNA(Ile2) + L-lysine + ATP = lysidine(34) in tRNA(Ile2) + AMP + diphosphate + H(+). Ligates lysine onto the cytidine present at position 34 of the AUA codon-specific tRNA(Ile) that contains the anticodon CAU, in an ATP-dependent manner. Cytidine is converted to lysidine, thus changing the amino acid specificity of the tRNA from methionine to isoleucine. This chain is tRNA(Ile)-lysidine synthase, found in Neisseria gonorrhoeae (strain ATCC 700825 / FA 1090).